The primary structure comprises 416 residues: MAYFLEQTDSEIFELIFEEYKRQNEHLEMIASENYTFASVMEAMGSVLTNKYAEGYPNKRYYGGCEVVDKIESLAIERAKKLFNCQFANVQAHSGSQANNAVYHALLKPYDKILGMDLSCGGHLTHGAKVSLTGKHYQSFSYGVNLDGYIDYEEALKIAQSVKPEIIVCGFSAYPREIDFKKFREIADEVGALLLGDIAHVAGLVVAGEHAHPFPHCHVVSSTTHKTLRGPRGGLILTNDEEIAAKIDKAIFPGTQGGPLMHAIAAKAVGFKENLKPEFKAYAQLVKSNMQVLAKALQEKNHKLVSGGTSNHLLLMDFLDKPYSGKDADIALGNAGITVNKNTIPGETRSPFVTSGIRIGSAALSARGMGAKEFEIIGNKISDILNDINNVSLQLHVKEELKAMASQFPVYQQPIF.

(6S)-5,6,7,8-tetrahydrofolate is bound by residues L118 and 122 to 124; that span reads GHL. An N6-(pyridoxal phosphate)lysine modification is found at K226. Residues E242 and 350 to 352 contribute to the (6S)-5,6,7,8-tetrahydrofolate site; that span reads SPF.

The protein belongs to the SHMT family. As to quaternary structure, homodimer. Pyridoxal 5'-phosphate is required as a cofactor.

It localises to the cytoplasm. It catalyses the reaction (6R)-5,10-methylene-5,6,7,8-tetrahydrofolate + glycine + H2O = (6S)-5,6,7,8-tetrahydrofolate + L-serine. It functions in the pathway one-carbon metabolism; tetrahydrofolate interconversion. It participates in amino-acid biosynthesis; glycine biosynthesis; glycine from L-serine: step 1/1. In terms of biological role, catalyzes the reversible interconversion of serine and glycine with tetrahydrofolate (THF) serving as the one-carbon carrier. This reaction serves as the major source of one-carbon groups required for the biosynthesis of purines, thymidylate, methionine, and other important biomolecules. Also exhibits THF-independent aldolase activity toward beta-hydroxyamino acids, producing glycine and aldehydes, via a retro-aldol mechanism. This Helicobacter pylori (strain Shi470) protein is Serine hydroxymethyltransferase.